The chain runs to 211 residues: ATP-dependent Clp protease proteolytic subunit (211 aa).

Ser107 (nucleophile) is an active-site residue. The active site involves His132.

It belongs to the peptidase S14 family. In terms of assembly, fourteen ClpP subunits assemble into 2 heptameric rings which stack back to back to give a disk-like structure with a central cavity, resembling the structure of eukaryotic proteasomes.

The protein localises to the cytoplasm. The enzyme catalyses Hydrolysis of proteins to small peptides in the presence of ATP and magnesium. alpha-casein is the usual test substrate. In the absence of ATP, only oligopeptides shorter than five residues are hydrolyzed (such as succinyl-Leu-Tyr-|-NHMec, and Leu-Tyr-Leu-|-Tyr-Trp, in which cleavage of the -Tyr-|-Leu- and -Tyr-|-Trp bonds also occurs).. Its function is as follows. Cleaves peptides in various proteins in a process that requires ATP hydrolysis. Has a chymotrypsin-like activity. Plays a major role in the degradation of misfolded proteins. The chain is ATP-dependent Clp protease proteolytic subunit from Xanthobacter autotrophicus (strain ATCC BAA-1158 / Py2).